Reading from the N-terminus, the 32-residue chain is Conotoxin sr7a (32 aa).

Cystine bridges form between cysteine 1-cysteine 17, cysteine 8-cysteine 21, and cysteine 16-cysteine 31. Serine 32 carries the post-translational modification Serine amide.

Expressed by the venom duct.

The protein resides in the secreted. Its function is as follows. Elicits hyperactivity when injected intracranially into mice and produces paralysis when injected into the pedal muscle of freshwater snails, Pomacea paludosa, but it has no apparent effect after intramuscular injection into the limpet Patella opea or the freshwater fish Lebistes reticulatus. The polypeptide is Conotoxin sr7a (Conus spurius (Alphabet cone)).